Reading from the N-terminus, the 460-residue chain is UDP-N-acetylmuramoylalanine--D-glutamate ligase (460 aa).

117 to 123 is an ATP binding site; it reads GTNGKTT.

Belongs to the MurCDEF family.

Its subcellular location is the cytoplasm. The enzyme catalyses UDP-N-acetyl-alpha-D-muramoyl-L-alanine + D-glutamate + ATP = UDP-N-acetyl-alpha-D-muramoyl-L-alanyl-D-glutamate + ADP + phosphate + H(+). It participates in cell wall biogenesis; peptidoglycan biosynthesis. Its function is as follows. Cell wall formation. Catalyzes the addition of glutamate to the nucleotide precursor UDP-N-acetylmuramoyl-L-alanine (UMA). The protein is UDP-N-acetylmuramoylalanine--D-glutamate ligase of Prochlorococcus marinus (strain MIT 9313).